Consider the following 529-residue polypeptide: UPF0159 protein TC_0921 (529 aa).

2 consecutive ThyX domains span residues 38–274 and 309–511; these read KGAL…AEPH and KGVK…LKFV.

Belongs to the UPF0159 family.

The polypeptide is UPF0159 protein TC_0921 (Chlamydia muridarum (strain MoPn / Nigg)).